Here is a 265-residue protein sequence, read N- to C-terminus: Glycine/sarcosine N-methyltransferase (265 aa).

Residues Y28, W36, R45, A69, D90, D116–W117, and L134 contribute to the S-adenosyl-L-methionine site. Residues N136, R169, and Y208 each coordinate substrate.

Belongs to the class I-like SAM-binding methyltransferase superfamily. Glycine N-methyltransferase family. As to quaternary structure, monomer.

The enzyme catalyses glycine + 2 S-adenosyl-L-methionine = N,N-dimethylglycine + 2 S-adenosyl-L-homocysteine + 2 H(+). The catalysed reaction is glycine + S-adenosyl-L-methionine = sarcosine + S-adenosyl-L-homocysteine + H(+). It carries out the reaction sarcosine + S-adenosyl-L-methionine = N,N-dimethylglycine + S-adenosyl-L-homocysteine + H(+). The protein operates within amine and polyamine biosynthesis; betaine biosynthesis via glycine pathway; betaine from glycine: step 1/3. Its pathway is amine and polyamine biosynthesis; betaine biosynthesis via glycine pathway; betaine from glycine: step 2/3. Its activity is regulated as follows. Inhibited by acetate, dimethylglycine and S-adenosyl-L-homocysteine. In terms of biological role, catalyzes the methylation of glycine and sarcosine to sarcosine and dimethylglycine, respectively, with S-adenosylmethionine (AdoMet) acting as the methyl donor. This Aphanothece halophytica protein is Glycine/sarcosine N-methyltransferase.